The chain runs to 72 residues: UPF0495 protein KLLA0D04334g (72 aa).

Residues 20–42 (PVELTPLFLAMGVALASGTWFSY) traverse the membrane as a helical segment.

Belongs to the UPF0495 family.

Its subcellular location is the membrane. In Kluyveromyces lactis (strain ATCC 8585 / CBS 2359 / DSM 70799 / NBRC 1267 / NRRL Y-1140 / WM37) (Yeast), this protein is UPF0495 protein KLLA0D04334g.